The chain runs to 1024 residues: Error-prone DNA polymerase (1024 aa).

It belongs to the DNA polymerase type-C family. DnaE2 subfamily.

The protein localises to the cytoplasm. The enzyme catalyses DNA(n) + a 2'-deoxyribonucleoside 5'-triphosphate = DNA(n+1) + diphosphate. Its function is as follows. DNA polymerase involved in damage-induced mutagenesis and translesion synthesis (TLS). It is not the major replicative DNA polymerase. The polypeptide is Error-prone DNA polymerase (Vibrio vulnificus (strain CMCP6)).